The sequence spans 100 residues: Urease subunit gamma (100 aa).

The protein belongs to the urease gamma subunit family. In terms of assembly, heterotrimer of UreA (gamma), UreB (beta) and UreC (alpha) subunits. Three heterotrimers associate to form the active enzyme.

It localises to the cytoplasm. It catalyses the reaction urea + 2 H2O + H(+) = hydrogencarbonate + 2 NH4(+). It participates in nitrogen metabolism; urea degradation; CO(2) and NH(3) from urea (urease route): step 1/1. The chain is Urease subunit gamma from Escherichia coli.